The primary structure comprises 123 residues: Ribosome-binding factor A (123 aa).

It belongs to the RbfA family. In terms of assembly, monomer. Binds 30S ribosomal subunits, but not 50S ribosomal subunits or 70S ribosomes.

It is found in the cytoplasm. One of several proteins that assist in the late maturation steps of the functional core of the 30S ribosomal subunit. Associates with free 30S ribosomal subunits (but not with 30S subunits that are part of 70S ribosomes or polysomes). Required for efficient processing of 16S rRNA. May interact with the 5'-terminal helix region of 16S rRNA. This Chlamydia trachomatis serovar A (strain ATCC VR-571B / DSM 19440 / HAR-13) protein is Ribosome-binding factor A.